Here is a 515-residue protein sequence, read N- to C-terminus: Nuclear hormone receptor family member nhr-62 (515 aa).

The segment at residues 95–170 (NLVCVVCGDQ…AGMNPRAVQS (76 aa)) is a DNA-binding region (nuclear receptor). 2 NR C4-type zinc fingers span residues 98 to 118 (CVVC…CNGC) and 134 to 153 (CRFE…CRAC). A disordered region spans residues 169–195 (QSERVEREQNGSPNQIEEDDYKDLSSP). The NR LBD domain maps to 225-509 (EMAKLSEQIV…YLCHEVQFIQ (285 aa)). An AF-2 region spans residues 498-509 (SEYLCHEVQFIQ).

The protein belongs to the nuclear hormone receptor family. As to expression, widely expressed at a low level in many tissues including the pharynx, sensory neurons, intestine, spermatheca, hypodermis, and excretory cell.

It is found in the nucleus. Orphan nuclear hormone receptor. Required for metabolic and physiologic responses associated with dietary-restriction-induced longevity. Modulates triglyceride and lipid metabolism and autophagy, associated with dietary-restriction, probably acting via regulation of transcription of target genes. The protein is Nuclear hormone receptor family member nhr-62 (nhr-62) of Caenorhabditis elegans.